The sequence spans 156 residues: Insulin (156 aa).

A signal peptide spans 1-31 (MSKFLLQSHSANACLLTLLLTLASNLDISLA). Intrachain disulfides connect cysteine 37–cysteine 114, cysteine 49–cysteine 119, cysteine 61–cysteine 128, and cysteine 112–cysteine 115. Positions 79 to 93 (DTENVNDKLRGILLN) are cleaved as a propeptide — c peptide beta. Positions 96-102 (EAFSYLT) are cleaved as a propeptide — c peptide alpha. Positions 141-156 (TGRSNSGHAQLEDNFS) are cleaved as a propeptide — d peptide. Residues 144–156 (SNSGHAQLEDNFS) constitute a propeptide, d peptide short form. A 4-carboxyglutamate modification is found at glutamate 152.

It belongs to the insulin family. Heterodimer of a B chain or a B chain' and an A chain probably linked by three disulfide bonds. Expressed in the central region of the cerebral ganglia mostly within the F and C clusters.

It localises to the secreted. Its function is as follows. Involved in glucose metabolism. This is Insulin (PIN) from Aplysia californica (California sea hare).